Reading from the N-terminus, the 542-residue chain is Glucose-6-phosphate isomerase (542 aa).

The active-site Proton donor is E353. Active-site residues include H384 and K508.

It belongs to the GPI family.

The protein localises to the cytoplasm. It carries out the reaction alpha-D-glucose 6-phosphate = beta-D-fructose 6-phosphate. It participates in carbohydrate biosynthesis; gluconeogenesis. The protein operates within carbohydrate degradation; glycolysis; D-glyceraldehyde 3-phosphate and glycerone phosphate from D-glucose: step 2/4. Its function is as follows. Catalyzes the reversible isomerization of glucose-6-phosphate to fructose-6-phosphate. This is Glucose-6-phosphate isomerase from Corynebacterium efficiens (strain DSM 44549 / YS-314 / AJ 12310 / JCM 11189 / NBRC 100395).